Here is a 396-residue protein sequence, read N- to C-terminus: 1-deoxy-D-xylulose 5-phosphate reductoisomerase (396 aa).

The NADPH site is built by Thr-10, Gly-11, Ser-12, Ile-13, and Asn-123. Lys-124 serves as a coordination point for 1-deoxy-D-xylulose 5-phosphate. Position 125 (Glu-125) interacts with NADPH. Residue Asp-149 coordinates Mn(2+). Residues Ser-150, Glu-151, Ser-185, and His-208 each contribute to the 1-deoxy-D-xylulose 5-phosphate site. Residue Glu-151 participates in Mn(2+) binding. An NADPH-binding site is contributed by Gly-214. Residues Ser-221, Asn-226, Lys-227, and Glu-230 each coordinate 1-deoxy-D-xylulose 5-phosphate. Mn(2+) is bound at residue Glu-230.

The protein belongs to the DXR family. The cofactor is Mg(2+). Mn(2+) is required as a cofactor.

The enzyme catalyses 2-C-methyl-D-erythritol 4-phosphate + NADP(+) = 1-deoxy-D-xylulose 5-phosphate + NADPH + H(+). Its pathway is isoprenoid biosynthesis; isopentenyl diphosphate biosynthesis via DXP pathway; isopentenyl diphosphate from 1-deoxy-D-xylulose 5-phosphate: step 1/6. In terms of biological role, catalyzes the NADPH-dependent rearrangement and reduction of 1-deoxy-D-xylulose-5-phosphate (DXP) to 2-C-methyl-D-erythritol 4-phosphate (MEP). The chain is 1-deoxy-D-xylulose 5-phosphate reductoisomerase from Shewanella sp. (strain MR-4).